Reading from the N-terminus, the 312-residue chain is tRNA uridine(34) hydroxylase (312 aa).

The Rhodanese domain occupies 130–225 (RGDEVVFFDG…YGEKFGNQGL (96 aa)). Cys185 serves as the catalytic Cysteine persulfide intermediate.

This sequence belongs to the TrhO family.

The catalysed reaction is uridine(34) in tRNA + AH2 + O2 = 5-hydroxyuridine(34) in tRNA + A + H2O. In terms of biological role, catalyzes oxygen-dependent 5-hydroxyuridine (ho5U) modification at position 34 in tRNAs. In Corynebacterium efficiens (strain DSM 44549 / YS-314 / AJ 12310 / JCM 11189 / NBRC 100395), this protein is tRNA uridine(34) hydroxylase.